The following is a 202-amino-acid chain: Holliday junction branch migration complex subunit RuvA (202 aa).

Residues 1-65 (MIAYVEGRLA…EDALELYGFA (65 aa)) form a domain I region. Residues 66–144 (TWDERQTFIV…VEDLPAAAPL (79 aa)) are domain II. The interval 145 to 155 (VTGGAPGGVFR) is flexible linker. The tract at residues 155-202 (RDALAGLANLGYGEEEASHVLKDVLHGEPDLDVGGALRAALRALARGR) is domain III.

It belongs to the RuvA family. As to quaternary structure, homotetramer. Forms an RuvA(8)-RuvB(12)-Holliday junction (HJ) complex. HJ DNA is sandwiched between 2 RuvA tetramers; dsDNA enters through RuvA and exits via RuvB. An RuvB hexamer assembles on each DNA strand where it exits the tetramer. Each RuvB hexamer is contacted by two RuvA subunits (via domain III) on 2 adjacent RuvB subunits; this complex drives branch migration. In the full resolvosome a probable DNA-RuvA(4)-RuvB(12)-RuvC(2) complex forms which resolves the HJ.

Its subcellular location is the cytoplasm. In terms of biological role, the RuvA-RuvB-RuvC complex processes Holliday junction (HJ) DNA during genetic recombination and DNA repair, while the RuvA-RuvB complex plays an important role in the rescue of blocked DNA replication forks via replication fork reversal (RFR). RuvA specifically binds to HJ cruciform DNA, conferring on it an open structure. The RuvB hexamer acts as an ATP-dependent pump, pulling dsDNA into and through the RuvAB complex. HJ branch migration allows RuvC to scan DNA until it finds its consensus sequence, where it cleaves and resolves the cruciform DNA. This Nitratidesulfovibrio vulgaris (strain ATCC 29579 / DSM 644 / CCUG 34227 / NCIMB 8303 / VKM B-1760 / Hildenborough) (Desulfovibrio vulgaris) protein is Holliday junction branch migration complex subunit RuvA.